Here is a 597-residue protein sequence, read N- to C-terminus: MTTNLKQKLKTAPKKPGCYLWKDSNGKVLYVGKASNIFNRVHQYFQKNNPYKTQLLSSQISDVDFFILKDENDALNLEAKLINQYQPRFNLVLKQNNGYLYFYITKAKKPTLELARKYQIKTTKCFGPFASSKFKLREIHDLLLKLFPLRKCAPHQKNHPCFYFQMGLCMGQCMQTDTKEKYQQVISNIEQFFNDPSVVINYLKAAEKKASDNQEFEKAQQFLTLQKAVLELTKTHHTTIIKQKSSHDFIGYVFQNNVLAITIFCYEKGELTDKEQAVFTLEQTDIVEVESAIITFIYHHYKTTPLPSKITVSLDETNLKLISDSLKIGVFKPKNGNEKLILQTVIDNAKHALATKWLKFTSNYDKTQLHKDLAQLLNTDYIHSLEIIDVSFYDQNHVVGCMLRFEDGKKIKHLSRRYNINSLKKGDTNHIALLVYRRILSAMQTKANLPFSDLLIIDGGKAQIKSVKQVFSLFSNVKPPIIIGLVKNKNHQTDHIMLSDFQVKKIAINSPLFHYLATIQTEVDGFAKRSAFNKLSNHQLQNPLLQIPGVGKITAQILFDNFQTLNNIKLASVNELSQFIKKPLAQKIKTYFAKQTD.

In terms of domain architecture, GIY-YIG spans 14–91 (KKPGCYLWKD…INQYQPRFNL (78 aa)).

This sequence belongs to the UvrC family. Interacts with UvrB in an incision complex.

It localises to the cytoplasm. The UvrABC repair system catalyzes the recognition and processing of DNA lesions. UvrC both incises the 5' and 3' sides of the lesion. The N-terminal half is responsible for the 3' incision and the C-terminal half is responsible for the 5' incision. This is UvrABC system protein C from Mycoplasma genitalium (strain ATCC 33530 / DSM 19775 / NCTC 10195 / G37) (Mycoplasmoides genitalium).